The sequence spans 241 residues: Probable WRKY transcription factor 63 (241 aa).

The tract at residues 56-79 is disordered; that stretch reads NSPNRQPHHESSSRDMAGLVPQRS. Residues 97 to 165 constitute a DNA-binding region (WRKY); it reads SPNPRLDDGF…YLGQHTCKAF (69 aa).

It belongs to the WRKY group III family.

It localises to the nucleus. Transcription factor. Interacts specifically with the W box (5'-(T)TGAC[CT]-3'), a frequently occurring elicitor-responsive cis-acting element. The polypeptide is Probable WRKY transcription factor 63 (WRKY63) (Arabidopsis thaliana (Mouse-ear cress)).